The chain runs to 215 residues: Keratin-associated protein 26-1 (215 aa).

The protein belongs to the PMG family. As to quaternary structure, interacts with hair keratins.

Functionally, in the hair cortex, hair keratin intermediate filaments are embedded in an interfilamentous matrix, consisting of hair keratin-associated proteins (KRTAP), which are essential for the formation of a rigid and resistant hair shaft through their extensive disulfide bond cross-linking with abundant cysteine residues of hair keratins. The matrix proteins include the high-sulfur and high-glycine-tyrosine keratins. This is Keratin-associated protein 26-1 from Mus musculus (Mouse).